The chain runs to 267 residues: 5'-nucleotidase SurE (267 aa).

A divalent metal cation-binding residues include D9, D10, S40, and N97.

The protein belongs to the SurE nucleotidase family. A divalent metal cation serves as cofactor.

The protein resides in the cytoplasm. It catalyses the reaction a ribonucleoside 5'-phosphate + H2O = a ribonucleoside + phosphate. In terms of biological role, nucleotidase that shows phosphatase activity on nucleoside 5'-monophosphates. The polypeptide is 5'-nucleotidase SurE (Helicobacter pylori (strain Shi470)).